A 412-amino-acid polypeptide reads, in one-letter code: Peptidase T (412 aa).

H84 is a binding site for Zn(2+). The active site involves D86. Residue D146 coordinates Zn(2+). The active-site Proton acceptor is the E179. Positions 180, 202, and 385 each coordinate Zn(2+).

The protein belongs to the peptidase M20B family. It depends on Zn(2+) as a cofactor.

The protein localises to the cytoplasm. The catalysed reaction is Release of the N-terminal residue from a tripeptide.. In terms of biological role, cleaves the N-terminal amino acid of tripeptides. The chain is Peptidase T from Haemophilus influenzae (strain PittGG).